We begin with the raw amino-acid sequence, 60 residues long: Large ribosomal subunit protein bL32 (60 aa).

The tract at residues 1–60 (MAVQQVKKSRSKRDMRRSHDSLTNPTLSTDKSTGELHLRHHVSPNGFYKGRKVVDTKSED) is disordered. Basic residues predominate over residues 7-16 (KKSRSKRDMR). Residues 22–31 (LTNPTLSTDK) are compositionally biased toward polar residues.

The protein belongs to the bacterial ribosomal protein bL32 family.

This chain is Large ribosomal subunit protein bL32, found in Francisella tularensis subsp. holarctica (strain LVS).